Reading from the N-terminus, the 1038-residue chain is Ubiquitin carboxyl-terminal hydrolase 36 (1038 aa).

Disordered regions lie at residues 22-44 and 107-148; these read LGGNSSAGSSTDQAKSGEDTNGS and ANGH…PKPK. The span at 23–44 shows a compositional bias: polar residues; that stretch reads GGNSSAGSSTDQAKSGEDTNGS. Residues 172–480 enclose the USP domain; it reads TGMINVGNTC…NAYIMFFELD (309 aa). The Nucleophile role is filled by Cys181. The active-site Proton acceptor is His439. 4 disordered regions span residues 487–794, 818–881, 912–985, and 1000–1038; these read PAAN…SKTG, GSPV…SNGS, LLVD…YNQN, and RFGGPGSAKFQQQRALQRHLSAGGGFSRRQPSAQQQQQT. Low complexity-rich tracts occupy residues 502–517, 546–559, and 587–606; these read STTPVPAATVSSPSPT, QQNQQSPQNGLQLG, and NGNKSSSPSSNSSSNHKSIN. Phosphoserine occurs at positions 513 and 515. A compositionally biased stretch (polar residues) spans 629-641; that stretch reads TTAQLPSMPNMTE. Residues Thr658 and Thr662 each carry the phosphothreonine modification. 2 positions are modified to phosphoserine: Ser672 and Ser674. Residues 703 to 728 are compositionally biased toward polar residues; the sequence is TNGHSKTNGSHTNGSASSSVHVNNSK. The span at 729-746 shows a compositional bias: basic and acidic residues; the sequence is QKTDAIDEIFKSLKKSAD. The residue at position 747 (Ser747) is a Phosphoserine. The span at 747–756 shows a compositional bias: acidic residues; sequence SDEDDDEEEP. Residues 766 to 776 show a composition bias toward low complexity; the sequence is PQKQSQSQSKA. The span at 777–786 shows a compositional bias: pro residues; that stretch reads PPSPKTPPSP. The residue at position 779 (Ser779) is a Phosphoserine. Thr782 bears the Phosphothreonine mark. 2 positions are modified to phosphoserine: Ser785 and Ser819. Thr825 is modified (phosphothreonine). A compositionally biased stretch (polar residues) spans 832-844; sequence NPFSSSKPSTDSP. Ser843 carries the phosphoserine modification. Position 846 is a phosphothreonine (Thr846). The span at 859-881 shows a compositional bias: polar residues; sequence ALKSHQQPRVGNGYQSNATSNGS. A compositionally biased stretch (basic and acidic residues) spans 912-923; the sequence is LLVDAREQRQRD. The segment covering 942–953 has biased composition (low complexity); it reads SGSAKGNNASNS.

Belongs to the peptidase C19 family. As to quaternary structure, interacts with atms/PAF1, but not with CycT. Interacts (via C-terminus) with imd (via N-terminus).

It is found in the nucleus. It localises to the nucleolus. The protein localises to the cytoplasm. It catalyses the reaction Thiol-dependent hydrolysis of ester, thioester, amide, peptide and isopeptide bonds formed by the C-terminal Gly of ubiquitin (a 76-residue protein attached to proteins as an intracellular targeting signal).. In terms of biological role, hydrolase that deubiquitinates polyubiquitinated target proteins including imd. Required for preventing the constitutive activation of the imd/NF-kappa-B (Imd) signaling cascade under unchalleneged conditions. Deubiquitinates imd linked 'Lys-63' chains which leads its proteasomal degradation and consequently down-regulation of the Imd signaling cascade. Removal of the activating 'Lys-63'-linked chains is likely to enable their replacement with 'Lys-48'-linked chains which act as 'tags' the for proteasomal degradation of imd. Required for maintaining multiple types of adult stem cells, including male and female germline, epithelial follicle cell and intestinal stem cells. May function as a transcriptional repressor by continually deubiquiting histone H2B at the promoters of genes critical for cellular differentiation, thereby preventing histone H3 'Lys-4' trimethylation (H3K4me3). Controls selective autophagy activation by ubiquitinated proteins. This chain is Ubiquitin carboxyl-terminal hydrolase 36 (scny), found in Drosophila melanogaster (Fruit fly).